Here is a 98-residue protein sequence, read N- to C-terminus: Ferredoxin-3 (98 aa).

4Fe-4S ferredoxin-type domains follow at residues Phe18–Leu47 and Val66–Leu95. [4Fe-4S] cluster contacts are provided by Cys27, Cys30, Cys33, Cys37, Cys75, Cys78, Cys81, and Cys85.

Homodimer. [4Fe-4S] cluster serves as cofactor.

Ferredoxins are iron-sulfur proteins that transfer electrons in a wide variety of metabolic reactions. The protein is Ferredoxin-3 (fdxB) of Trichormus variabilis (strain ATCC 29413 / PCC 7937) (Anabaena variabilis).